Consider the following 49-residue polypeptide: MRKKITLACKTCGNRNYTTMKSSASAAERLEVKKYCSTCNSHTAHLETK.

This sequence belongs to the bacterial ribosomal protein bL33 family.

In terms of biological role, plays a role in sporulation at high temperatures. The polypeptide is Large ribosomal subunit protein bL33B (rpmGB) (Bacillus subtilis (strain 168)).